Here is a 498-residue protein sequence, read N- to C-terminus: ATP synthase subunit beta, chloroplastic (498 aa).

Residue 172 to 179 (GGAGVGKT) coordinates ATP.

Belongs to the ATPase alpha/beta chains family. In terms of assembly, F-type ATPases have 2 components, CF(1) - the catalytic core - and CF(0) - the membrane proton channel. CF(1) has five subunits: alpha(3), beta(3), gamma(1), delta(1), epsilon(1). CF(0) has four main subunits: a(1), b(1), b'(1) and c(9-12).

It localises to the plastid. It is found in the chloroplast thylakoid membrane. It catalyses the reaction ATP + H2O + 4 H(+)(in) = ADP + phosphate + 5 H(+)(out). Its function is as follows. Produces ATP from ADP in the presence of a proton gradient across the membrane. The catalytic sites are hosted primarily by the beta subunits. This chain is ATP synthase subunit beta, chloroplastic, found in Helianthus annuus (Common sunflower).